The sequence spans 459 residues: 1,3-beta-glucanosyltransferase gas2 (459 aa).

Positions 1-19 (MVSFTKFTLQLLSASAAFA) are cleaved as a signal peptide. Residues N34 and N68 are each glycosylated (N-linked (GlcNAc...) asparagine). C69 and C98 are joined by a disulfide. Y87 serves as a coordination point for (1,3-beta-D-glucosyl)n. 3 N-linked (GlcNAc...) asparagine glycosylation sites follow: N90, N104, and N146. The (1,3-beta-D-glucosyl)n site is built by N155 and E156. E156 serves as the catalytic Proton donor. N160 is a glycosylation site (N-linked (GlcNAc...) asparagine). 2 residues coordinate (1,3-beta-D-glucosyl)n: D197 and R202. Intrachain disulfides connect C211-C350 and C235-C266. N-linked (GlcNAc...) asparagine glycosylation is found at N212, N218, and N254. E263 (nucleophile) is an active-site residue. N-linked (GlcNAc...) asparagine glycosylation occurs at N284. Y295 lines the (1,3-beta-D-glucosyl)n pocket. 5 N-linked (GlcNAc...) asparagine glycosylation sites follow: N308, N334, N344, N354, and N370. Intrachain disulfides connect C374-C427, C383-C449, and C402-C409. An N-linked (GlcNAc...) asparagine glycan is attached at N423.

Belongs to the glycosyl hydrolase 72 family.

It is found in the endoplasmic reticulum lumen. It localises to the secreted. Functionally, splits internally a 1,3-beta-glucan molecule and transfers the newly generated reducing end (the donor) to the non-reducing end of another 1,3-beta-glucan molecule (the acceptor) forming a 1,3-beta linkage, resulting in the elongation of 1,3-beta-glucan chains in the cell wall. The polypeptide is 1,3-beta-glucanosyltransferase gas2 (gas2) (Schizosaccharomyces pombe (strain 972 / ATCC 24843) (Fission yeast)).